Here is a 966-residue protein sequence, read N- to C-terminus: Muscular LMNA-interacting protein (966 aa).

At S129 the chain carries Phosphoserine. Disordered regions lie at residues 132–154 (EDEA…IATR), 182–207 (SHPE…TSEQ), 303–337 (LAPE…SLRS), 354–388 (PSPK…LKSP), 434–562 (IKQT…TRPS), 597–684 (KRTC…TPSL), 785–837 (SMHS…SQLT), and 929–966 (SLRD…DSKE). The tract at residues 144 to 810 (PPGATGNIAT…GSETIKTPTT (667 aa)) is required for interaction with ISL1. 2 stretches are compositionally biased toward polar residues: residues 195–207 (KHGQ…TSEQ) and 325–337 (TSPS…SLRS). 3 stretches are compositionally biased toward low complexity: residues 354-387 (PSPK…GLKS), 437-455 (TPST…TGST), and 478-497 (PLSQ…SYAA). S486 bears the Phosphoserine mark. The span at 507-521 (TLRSSTTPPQSQTDL) shows a compositional bias: polar residues. 2 stretches are compositionally biased toward basic and acidic residues: residues 542–555 (GRKD…EKNR) and 597–607 (KRTCSQRHSDQ). Composition is skewed to polar residues over residues 639–649 (SSLTQALQRSP) and 657–684 (GSAT…TPSL). Residues 785-797 (SMHSSDSPSRPSQ) show a composition bias toward low complexity. S791 carries the post-translational modification Phosphoserine. Residues 798 to 810 (TMLGSETIKTPTT) show a composition bias toward polar residues. A compositionally biased stretch (low complexity) spans 825–834 (SSSSSTTSES). The span at 937-946 (SPTLLSQDTY) shows a compositional bias: polar residues. Over residues 957–966 (PEHDTLDSKE) the composition is skewed to basic and acidic residues.

In terms of assembly, directly interacts with LMNA. Interacts with ISL1 (via N-terminal domain); the interaction represses ISL1 transactivator activity. Interactions of ISL1 with MLIP1 and GCN5/KAT2A may be mutually exclusive. In terms of tissue distribution, expressed in cardiomyoctes. Expression is highly reduced in hypertrophic cardiomyocytes.

Its subcellular location is the nucleus. It is found in the nucleus envelope. The protein localises to the PML body. The protein resides in the cytoplasm. It localises to the cytosol. Its subcellular location is the cell membrane. It is found in the sarcolemma. In terms of biological role, required for myoblast differentiation into myotubes, possibly acting as a transcriptional regulator of the myogenic program. Required for cardiac adaptation to stress through integrated regulation of the AKT/mTOR pathways and FOXO1. Regulates cardiac homeostasis and plays a role in the protection against cardiac hypertrophy. Binds chromatin. May act as a transcriptional cofactor for ISL1, repressing its transcriptional activity. May also repress MYOCD transcriptional activity. The protein is Muscular LMNA-interacting protein of Rattus norvegicus (Rat).